We begin with the raw amino-acid sequence, 75 residues long: Small ribosomal subunit protein bS18 (75 aa).

It belongs to the bacterial ribosomal protein bS18 family. In terms of assembly, part of the 30S ribosomal subunit. Forms a tight heterodimer with protein bS6.

In terms of biological role, binds as a heterodimer with protein bS6 to the central domain of the 16S rRNA, where it helps stabilize the platform of the 30S subunit. This chain is Small ribosomal subunit protein bS18, found in Hydrogenovibrio crunogenus (strain DSM 25203 / XCL-2) (Thiomicrospira crunogena).